The chain runs to 323 residues: MDSDASLVSSRPSSPEPDDLFLPARSKGGSSSGFTGGTVSSSTPSDCPPELSSELRGAMGASGAHPGDKLGGGGFKSSSSSTSSSTSSAATSSTKKDKKQMTEPELQQLRLKINSRERKRMHDLNIAMDGLREVMPYAHGPSVRKLSKIATLLLARNYILMLTNSLEEMKRLVSEIYGGHHAGFHPSACGGLAHSAPLPTATAHPAAAAHAAHHPAVHHPILPPAAAAAAAAAAAAAVSSASLPGSGLSSVGSIRPPHGLLKSPSAAAAAPLGGGGGGSGGSGGFQHWGGMPCPCSMCQVPPPHHHVSAMGAGTLPRLTSDAK.

Over residues methionine 1 to serine 13 the composition is skewed to polar residues. Residues methionine 1 to glutamine 107 form a disordered region. Low complexity predominate over residues serine 77 to serine 93. The region spanning glutamine 108–leucine 162 is the bHLH domain.

Interacts with NKX2-2. Interacts with ZNF488. As to expression, expressed specifically in the brain.

The protein resides in the nucleus. Its subcellular location is the cytoplasm. Its function is as follows. Required for oligodendrocyte and motor neuron specification in the spinal cord, as well as for the development of somatic motor neurons in the hindbrain. Functions together with ZNF488 to promote oligodendrocyte differentiation. Cooperates with OLIG1 to establish the pMN domain of the embryonic neural tube. Antagonist of V2 interneuron and of NKX2-2-induced V3 interneuron development. In Mus musculus (Mouse), this protein is Oligodendrocyte transcription factor 2 (Olig2).